A 442-amino-acid polypeptide reads, in one-letter code: Meiotically up-regulated gene 191 protein (442 aa).

Residue T361 is modified to Phosphothreonine. The segment covering 416–429 (RNNPSSGESTTLPQ) has biased composition (polar residues). Residues 416–442 (RNNPSSGESTTLPQPSHGKKDKDCVIS) are disordered. A compositionally biased stretch (basic and acidic residues) spans 433-442 (GKKDKDCVIS).

The protein localises to the cytoplasm. It localises to the nucleus. Functionally, has a role in meiosis. The chain is Meiotically up-regulated gene 191 protein (mug191) from Schizosaccharomyces pombe (strain 972 / ATCC 24843) (Fission yeast).